Reading from the N-terminus, the 341-residue chain is DNA-directed RNA polymerase subunit alpha (341 aa).

The interval 1-223 is alpha N-terminal domain (alpha-NTD); it reads MEQKRPQLKA…DELSVFGNVE (223 aa). An alpha C-terminal domain (alpha-CTD) region spans residues 268-341; that stretch reads PQPFPTDQDT…LAQFGLALRD (74 aa).

It belongs to the RNA polymerase alpha chain family. In terms of assembly, homodimer. The RNAP catalytic core consists of 2 alpha, 1 beta, 1 beta' and 1 omega subunit. When a sigma factor is associated with the core the holoenzyme is formed, which can initiate transcription.

The catalysed reaction is RNA(n) + a ribonucleoside 5'-triphosphate = RNA(n+1) + diphosphate. Its function is as follows. DNA-dependent RNA polymerase catalyzes the transcription of DNA into RNA using the four ribonucleoside triphosphates as substrates. The chain is DNA-directed RNA polymerase subunit alpha from Deinococcus radiodurans (strain ATCC 13939 / DSM 20539 / JCM 16871 / CCUG 27074 / LMG 4051 / NBRC 15346 / NCIMB 9279 / VKM B-1422 / R1).